A 783-amino-acid chain; its full sequence is MDAEAGVGGADQLPWRQHYRNLLLLAYQSFGVVYGDLSTSPLYVYKSTFSGRLRRYQDEQTVFGVLSLIFWTFTLIPLLKYVTIVLSADDNGEGGPFALYSLLCRHAKLSFLPNQQSADEELSTYYRNGFTSRHGSLPWLRRFMEKHKNARTVLLLIVLCGASMMIGDGILTPAISVLSSMSGLKVRATGLHDRSVVLLSCIVLVGLFALQHRGTQKVAFMFAPIVVIWLFCIGGIGLYNIIHWNPRIYQALSPYYIVKFFRTTGKDGWIALGGILLSMTGCEAMFADLGHFTSASVRLAFITIIYPCLILQYMGQAAFLSKNILDMPTGFYDSIPGPIFWPVFVVATLAAVVGSQAVISATFSIVKQCHSLGCFPRVKVVHTSRWIYGQIYIPEINWILMVLCVAVTVAFRDITLIGNAYGVACMTVMFVTTFLMALIMIFVWQKNIIFALSFFLLFGSVEVVYLSSSLMKVTQGGWVPLVLALIFMSVMYIWHYGTRKKYQYDLQNKVSMRYILSLGPSLDVVRVPGIGLIYTELVTGVPNIFTHFTTNLPAFHEVLVFLCVKSVPVPYVSPDERYLVGRIGPRAYRMYRCIVRYGYKDVQRDDDNFENMLVMNIGKFIMMEAEDASSSASYDTANEGRMAVITTSDDYDSPLAVRDSNDLADSMTMRSTKSESLRSLQSSYEQESPNVSRRRRVRFELPEEDDMDQQVKDELLALVEAKHTGVTYVMGHVYIKARKNSSFFKRFAIDVGYSFLRKNCRGPSVTLHIPHISLIEVGMAYQV.

The Cytoplasmic portion of the chain corresponds to 1–21; it reads MDAEAGVGGADQLPWRQHYRN. Residues 22-42 traverse the membrane as a helical segment; it reads LLLLAYQSFGVVYGDLSTSPL. The Extracellular portion of the chain corresponds to 43-61; it reads YVYKSTFSGRLRRYQDEQT. The chain crosses the membrane as a helical span at residues 62–82; sequence VFGVLSLIFWTFTLIPLLKYV. The Cytoplasmic segment spans residues 83–152; the sequence is TIVLSADDNG…FMEKHKNART (70 aa). The chain crosses the membrane as a helical span at residues 153–173; sequence VLLLIVLCGASMMIGDGILTP. Topologically, residues 174 to 189 are extracellular; sequence AISVLSSMSGLKVRAT. Residues 190–210 form a helical membrane-spanning segment; sequence GLHDRSVVLLSCIVLVGLFAL. The Cytoplasmic segment spans residues 211-217; the sequence is QHRGTQK. Residues 218–238 traverse the membrane as a helical segment; sequence VAFMFAPIVVIWLFCIGGIGL. The Extracellular segment spans residues 239–268; that stretch reads YNIIHWNPRIYQALSPYYIVKFFRTTGKDG. The chain crosses the membrane as a helical span at residues 269–289; it reads WIALGGILLSMTGCEAMFADL. Residues 290-298 are Cytoplasmic-facing; sequence GHFTSASVR. A helical transmembrane segment spans residues 299–319; it reads LAFITIIYPCLILQYMGQAAF. At 320-338 the chain is on the extracellular side; it reads LSKNILDMPTGFYDSIPGP. The chain crosses the membrane as a helical span at residues 339-359; it reads IFWPVFVVATLAAVVGSQAVI. The Cytoplasmic segment spans residues 360–390; it reads SATFSIVKQCHSLGCFPRVKVVHTSRWIYGQ. Residues 391–411 form a helical membrane-spanning segment; sequence IYIPEINWILMVLCVAVTVAF. The Extracellular portion of the chain corresponds to 412–422; that stretch reads RDITLIGNAYG. The helical transmembrane segment at 423-443 threads the bilayer; the sequence is VACMTVMFVTTFLMALIMIFV. At 444–447 the chain is on the cytoplasmic side; the sequence is WQKN. The chain crosses the membrane as a helical span at residues 448–468; the sequence is IIFALSFFLLFGSVEVVYLSS. The Extracellular portion of the chain corresponds to 469–475; that stretch reads SLMKVTQ. Residues 476–496 traverse the membrane as a helical segment; sequence GGWVPLVLALIFMSVMYIWHY. Over 497-783 the chain is Cytoplasmic; sequence GTRKKYQYDL…LIEVGMAYQV (287 aa). Positions 662-691 are disordered; that stretch reads DLADSMTMRSTKSESLRSLQSSYEQESPNV. A compositionally biased stretch (polar residues) spans 677-691; sequence LRSLQSSYEQESPNV.

The protein belongs to the HAK/KUP transporter (TC 2.A.72.3) family.

The protein resides in the cell membrane. It catalyses the reaction K(+)(in) = K(+)(out). The enzyme catalyses Na(+)(in) = Na(+)(out). In terms of biological role, high-affinity potassium transporter. Can transport sodium under high sodium and low potassium concentrations in the extracellular environment. The chain is Probable potassium transporter 2 (HAK2) from Oryza sativa subsp. japonica (Rice).